Consider the following 284-residue polypeptide: Tropomyosin-2 (284 aa).

Residues 1-284 (MDAIKKKMQA…DQTFAELTGY (284 aa)) are a coiled coil. The disordered stretch occupies residues 82-110 (ESEVATQNRKVQQIEEDLEKSEERSTTAQ).

Belongs to the tropomyosin family. Homodimer.

In terms of biological role, tropomyosin, in association with the troponin complex, plays a central role in the calcium dependent regulation of muscle contraction. May also regulate motor systems required to maintain nuclear integrity and apico-basal polarity during embryogenesis. In Drosophila melanogaster (Fruit fly), this protein is Tropomyosin-2 (Tm2).